The sequence spans 843 residues: Major vault protein alpha (843 aa).

Ala-2 carries the N-acetylalanine modification. MVP repeat units follow at residues 2 to 56 (ADLN…IPQR), 57 to 111 (NYCT…KVTA), 112 to 163 (LQVV…EEIK), 164 to 216 (ATII…EIVN), 217 to 272 (AYVL…GEVH), 273 to 324 (ITTL…IHNI), 325 to 376 (YVLT…KRES), 377 to 442 (IPLD…STRV), and 443 to 505 (VTYR…FLGP). A disordered region spans residues 643 to 663 (QEAAARHEAERLEQGARGRLE). Over residues 646-663 (AARHEAERLEQGARGRLE) the composition is skewed to basic and acidic residues.

In terms of assembly, the vault ribonucleoprotein particle is a huge (400 A x 670 A) cage structure of 12.9 MDa. It consists of a dimer of half-vaults, with each half-vault comprising 39 identical major vault protein (MVP) chains. Dictyostelium is one of the few organisms in which the major component is actually two proteins (alpha and beta).

It localises to the cytoplasm. The protein localises to the nucleus. In terms of biological role, unknown, though MVP-alpha is required for normal vault structure. In Dictyostelium discoideum (Social amoeba), this protein is Major vault protein alpha (mvpA).